Here is a 212-residue protein sequence, read N- to C-terminus: 2-C-methyl-D-erythritol 4-phosphate cytidylyltransferase (212 aa).

It belongs to the IspD/TarI cytidylyltransferase family. IspD subfamily.

It carries out the reaction 2-C-methyl-D-erythritol 4-phosphate + CTP + H(+) = 4-CDP-2-C-methyl-D-erythritol + diphosphate. Its pathway is isoprenoid biosynthesis; isopentenyl diphosphate biosynthesis via DXP pathway; isopentenyl diphosphate from 1-deoxy-D-xylulose 5-phosphate: step 2/6. In terms of biological role, catalyzes the formation of 4-diphosphocytidyl-2-C-methyl-D-erythritol from CTP and 2-C-methyl-D-erythritol 4-phosphate (MEP). The polypeptide is 2-C-methyl-D-erythritol 4-phosphate cytidylyltransferase (Chlamydia felis (strain Fe/C-56) (Chlamydophila felis)).